We begin with the raw amino-acid sequence, 215 residues long: MLQVYLVRHGETQWNAERRIQGQSDSPLTAKGEQQAMQVATRAKELGITHIISSDLGRTRRTAEIIAQACGCDIIFDSRLRELNMGVLEKRHIDSLTEEEENWRRQLVNGTVDGRIPEGESMQELSDRVNAALESCRDLPQGSRPLLVSHGIALGCLVSTILGLPAWAARRLRLRNCSISRVDYQESLWLASGWVVETAGDISHLDAPALDELQR.

Residues 8–15 (RHGETQWN), 21–22 (QG), R58, R60, 82–85 (ELNM), 104–105 (RR), and 151–152 (GI) contribute to the substrate site. The active-site Tele-phosphohistidine intermediate is the H9. Residue E82 is the Proton donor/acceptor of the active site.

It belongs to the phosphoglycerate mutase family. GpmB subfamily.

It carries out the reaction (2R)-2-phosphoglycerate = (2R)-3-phosphoglycerate. It participates in carbohydrate degradation; glycolysis; pyruvate from D-glyceraldehyde 3-phosphate: step 3/5. In Shigella boydii serotype 18 (strain CDC 3083-94 / BS512), this protein is Probable phosphoglycerate mutase GpmB.